The chain runs to 551 residues: Dihydroxy-acid dehydratase (551 aa).

Cys-52 contacts [2Fe-2S] cluster. Asp-84 serves as a coordination point for Mg(2+). Cys-125 serves as a coordination point for [2Fe-2S] cluster. Residues Asp-126 and Lys-127 each coordinate Mg(2+). Position 127 is an N6-carboxylysine (Lys-127). Cys-197 lines the [2Fe-2S] cluster pocket. A Mg(2+)-binding site is contributed by Glu-448. Ser-474 acts as the Proton acceptor in catalysis.

It belongs to the IlvD/Edd family. In terms of assembly, homodimer. [2Fe-2S] cluster is required as a cofactor. It depends on Mg(2+) as a cofactor.

The catalysed reaction is (2R)-2,3-dihydroxy-3-methylbutanoate = 3-methyl-2-oxobutanoate + H2O. It catalyses the reaction (2R,3R)-2,3-dihydroxy-3-methylpentanoate = (S)-3-methyl-2-oxopentanoate + H2O. The protein operates within amino-acid biosynthesis; L-isoleucine biosynthesis; L-isoleucine from 2-oxobutanoate: step 3/4. Its pathway is amino-acid biosynthesis; L-valine biosynthesis; L-valine from pyruvate: step 3/4. Functions in the biosynthesis of branched-chain amino acids. Catalyzes the dehydration of (2R,3R)-2,3-dihydroxy-3-methylpentanoate (2,3-dihydroxy-3-methylvalerate) into 2-oxo-3-methylpentanoate (2-oxo-3-methylvalerate) and of (2R)-2,3-dihydroxy-3-methylbutanoate (2,3-dihydroxyisovalerate) into 2-oxo-3-methylbutanoate (2-oxoisovalerate), the penultimate precursor to L-isoleucine and L-valine, respectively. The chain is Dihydroxy-acid dehydratase from Francisella tularensis subsp. tularensis (strain FSC 198).